We begin with the raw amino-acid sequence, 821 residues long: DNA replication licensing factor MCM6 (821 aa).

Position 1 is an N-acetylmethionine (Met1). A phosphoserine mark is found at Ser13, Ser219, and Ser271. A Phosphothreonine modification is found at Thr278. The MCM domain occupies 346–553 (LYHNLCTSLF…TDYAIARRIV (208 aa)). Residues His359, Ser399, Thr400, Ala401, Lys402, Ser403, and Asn504 each coordinate ATP. Positions 528–531 (SRFD) match the Arginine finger motif. Residues Arg619 and Glu622 each coordinate ADP. At Lys643 the chain carries N6-acetyllysine. Residues 676–708 (TDEGQGGVNGHADSPAPVNRFNGSSEDASQETV) form a disordered region. Residues Ser689, Ser704, and Ser762 each carry the phosphoserine modification. Polar residues predominate over residues 696–708 (FNGSSEDASQETV). Residue Thr791 is modified to Phosphothreonine.

Belongs to the MCM family. Component of the MCM2-7 complex. The complex forms a toroidal hexameric ring with the proposed subunit order MCM2-MCM6-MCM4-MCM7-MCM3-MCM5. Component of the CMG helicase complex, a hexameric ring of related MCM2-7 subunits stabilized by CDC45 and the tetrameric GINS complex. May interact with MCM10. Interacts with TIPIN. Interacts with CDT1. Interacts with MCMBP. Interacts with DDI2. Post-translationally, O-glycosylated (O-GlcNAcylated), in a cell cycle-dependent manner.

The protein resides in the nucleus. Its subcellular location is the chromosome. It carries out the reaction ATP + H2O = ADP + phosphate + H(+). Functionally, acts as a component of the MCM2-7 complex (MCM complex) which is the replicative helicase essential for 'once per cell cycle' DNA replication initiation and elongation in eukaryotic cells. Core component of CDC45-MCM-GINS (CMG) helicase, the molecular machine that unwinds template DNA during replication, and around which the replisome is built. The active ATPase sites in the MCM2-7 ring are formed through the interaction surfaces of two neighboring subunits such that a critical structure of a conserved arginine finger motif is provided in trans relative to the ATP-binding site of the Walker A box of the adjacent subunit. The six ATPase active sites, however, are likely to contribute differentially to the complex helicase activity. The polypeptide is DNA replication licensing factor MCM6 (Mcm6) (Mus musculus (Mouse)).